We begin with the raw amino-acid sequence, 357 residues long: 3-isopropylmalate dehydrogenase (357 aa).

Substrate is bound by residues R97, R107, R135, and D224. The Mg(2+) site is built by D224, D248, and D252. Residue 282–294 coordinates NAD(+); the sequence is GSAPDIAGQDLAN.

It belongs to the isocitrate and isopropylmalate dehydrogenases family. LeuB type 1 subfamily. In terms of assembly, homodimer. Requires Mg(2+) as cofactor. It depends on Mn(2+) as a cofactor.

Its subcellular location is the cytoplasm. The enzyme catalyses (2R,3S)-3-isopropylmalate + NAD(+) = 4-methyl-2-oxopentanoate + CO2 + NADH. It functions in the pathway amino-acid biosynthesis; L-leucine biosynthesis; L-leucine from 3-methyl-2-oxobutanoate: step 3/4. Catalyzes the oxidation of 3-carboxy-2-hydroxy-4-methylpentanoate (3-isopropylmalate) to 3-carboxy-4-methyl-2-oxopentanoate. The product decarboxylates to 4-methyl-2 oxopentanoate. The protein is 3-isopropylmalate dehydrogenase of Prochlorococcus marinus (strain MIT 9313).